We begin with the raw amino-acid sequence, 126 residues long: Diadenosine hexaphosphate hydrolase (126 aa).

Positions 1 to 121 (MELGAGGVVF…EDLGLLEVAL (121 aa)) constitute a Nudix hydrolase domain. Substrate is bound by residues 21 to 23 (DRM) and 30 to 32 (KGH). Positions 31–52 (GHPEPGESLEEAAVREVWEETG) match the Nudix box motif. Mg(2+) is bound by residues Glu46 and Glu50. Substrate-binding positions include 66-68 (YVN), Arg74, and Glu112.

Belongs to the Nudix hydrolase family. In terms of assembly, monomer. Requires Mg(2+) as cofactor.

It catalyses the reaction P(1),P(6)-bis(5'-adenosyl) hexaphosphate + H2O = 2 ATP + 2 H(+). It carries out the reaction P(1),P(5)-bis(5'-adenosyl) pentaphosphate + H2O = ADP + ATP + 2 H(+). The catalysed reaction is P(1),P(4)-bis(5'-adenosyl) tetraphosphate + H2O = AMP + ATP + 2 H(+). Strongly inhibited by fluoride ions. In terms of biological role, specifically hydrolyzes (di)adenosine polyphosphates but not ATP or diadenosine triphosphate, generating ATP as the product. Diadenosine hexaphosphate (Ap6A) is the preferred substrate and hydrolysis yields 2 ATP. It is the only enzyme that symmetrically hydrolyzes Ap6A. It also hydrolyzes diadenosine pentaphosphate (Ap5A), diadenosine tetraphosphate (Ap4A) and adenosine tetraphosphate (p4A). The sequence is that of Diadenosine hexaphosphate hydrolase from Thermus thermophilus.